Consider the following 331-residue polypeptide: Phosphoribosylformylglycinamidine cyclo-ligase (331 aa).

Belongs to the AIR synthase family.

Its subcellular location is the cytoplasm. It carries out the reaction 2-formamido-N(1)-(5-O-phospho-beta-D-ribosyl)acetamidine + ATP = 5-amino-1-(5-phospho-beta-D-ribosyl)imidazole + ADP + phosphate + H(+). Its pathway is purine metabolism; IMP biosynthesis via de novo pathway; 5-amino-1-(5-phospho-D-ribosyl)imidazole from N(2)-formyl-N(1)-(5-phospho-D-ribosyl)glycinamide: step 2/2. The sequence is that of Phosphoribosylformylglycinamidine cyclo-ligase from Clostridium tetani (strain Massachusetts / E88).